We begin with the raw amino-acid sequence, 248 residues long: Probable transcriptional regulatory protein FTL_0929 (248 aa).

The protein belongs to the TACO1 family.

It localises to the cytoplasm. The polypeptide is Probable transcriptional regulatory protein FTL_0929 (Francisella tularensis subsp. holarctica (strain LVS)).